Consider the following 569-residue polypeptide: Linoleate hydratase (569 aa).

Tyr87 contacts FAD. The active-site Proton donor is Tyr205. Positions 254, 300, and 524 each coordinate FAD.

It belongs to the oleate hydratase family. The cofactor is FAD.

It localises to the cell membrane. The protein localises to the cytoplasm. The catalysed reaction is (9Z,12Z)-octadecadienoate + H2O = (10S)-hydroxy-(12Z)-octadecenoate. It catalyses the reaction (10E,12Z)-octadecadienoate + H2O = (10S)-hydroxy-(12Z)-octadecenoate. It carries out the reaction (9Z)-octadecenoate + H2O = 10-hydroxyoctadecanoate. The enzyme catalyses (10E)-octadecenoate + H2O = 10-hydroxyoctadecanoate. The catalysed reaction is (9E,11E)-octadecadienoate + H2O = 10-hydroxy-(11E)-octadecenoate. It catalyses the reaction (9Z,11E)-octadecadienoate + H2O = 10-hydroxy-(11E)-octadecenoate. It carries out the reaction (9Z)-hexadecenoate + H2O = 10-hydroxyhexadecanoate. The enzyme catalyses (9Z,12Z,15Z)-octadecatrienoate + H2O = (10S)-hydroxy-(12Z,15Z)-octadecadienoate. The catalysed reaction is (6Z,9Z,12Z)-octadecatrienoate + H2O = (10S)-hydroxy-(6Z,12Z)-octadecadienoate. It catalyses the reaction (6Z,9Z,12Z,15Z)-octadecatetraenoate + H2O = (10S)-hydroxy-(6Z,12Z,15Z)-octadecatrienoate. It functions in the pathway lipid metabolism; fatty acid metabolism. With respect to regulation, the addition of NADH or NADPH highly increases catalytic activity, likely by reducing the cofactor FAD to FADH2. The hydration and dehydration reactions are strongly inhibited by Ag(+), Fe(2+), Cu(2+), Zn(2+), Hg(2+), and Fe(3+). Is involved in a saturation metabolic pathway of polyunsaturated fatty acids, that detoxifies unsaturated fatty acids and generates hydroxy fatty acids, oxo fatty acids, conjugated fatty acids such as conjugated linoleic acids (CLAs), and partially saturated trans-fatty acids as intermediates. CLA-HY catalyzes the hydration and dehydration steps in the production of 10-hydroxy-cis-12-octadecenoate, trans-10,cis-12-CLA, cis-9,trans-11-CLA, trans-9,trans-11-CLA, oleate and trans-10-octadecenoate during linoleate metabolism. Is also able to hydrate palmitoleic acid (cis-9-hexadecenoic acid), oleic acid, alpha-linolenic acid, gamma-linolenic acid, and stearidonic acid into the corresponding 10-hydroxy fatty acids, and dehydrate 10-hydroxy-cis-12,cis-15-octadecadienoic acid, 10-hydroxy-cis-6,cis-12-octadecadienoic acid, and 10-hydroxyoctadecanoic acid into the corresponding fatty acids with cis double bonds at the Delta9 position. As part of the gut microbiome, this enzyme modifies host fatty acid composition and is expected to improve human health by altering lipid metabolism related to the onset of metabolic syndrome. Shows regioselectivity for Delta9 double bond hydration, generating C10 hydroxy groups in the (S)-configuration with high enantioselectivity, when another double bond is in position 12. Is not able to hydrate fatty acids with a trans carbon-carbon double bond at Delta9 position (elaidic acid, trans-9-octadecenoic acid), fatty acid esters (methyl linoleate, monolinolein, dilinolein, and trilinolein), and conjugated fatty acids (conjugated linoleic acids), as well as fatty acids with other chain lengths, such as myristoleic acid (cis-9-tetradecenoic acid), arachidonic acid (cis-5,cis-8,cis-11,cis-14-eicosatetraenoic acid), EPA (cis-5,cis-8,cis-11,cis-14,cis-17-eicosapentaenoic acid), DHA (cis-4,cis-7,cis-10,cis-13,cis-16,cis-19-docosahexaenoic acid) and fatty acids with a cis carbon-carbon double bond at Delta11 position, such as cis-vaccenic acid and cis-11-octadecenoic acid, or fatty alcohols, such as linoleyl alcohol. Is not able to dehydrate 12-hydroxy, 3-hydroxy, and 9-hydroxy fatty acids. This Lactiplantibacillus plantarum (Lactobacillus plantarum) protein is Linoleate hydratase.